The following is a 145-amino-acid chain: D-aminoacyl-tRNA deacylase (145 aa).

Residues 137–138 carry the Gly-cisPro motif, important for rejection of L-amino acids motif; that stretch reads GP.

This sequence belongs to the DTD family. Homodimer.

It localises to the cytoplasm. The catalysed reaction is glycyl-tRNA(Ala) + H2O = tRNA(Ala) + glycine + H(+). It catalyses the reaction a D-aminoacyl-tRNA + H2O = a tRNA + a D-alpha-amino acid + H(+). Its function is as follows. An aminoacyl-tRNA editing enzyme that deacylates mischarged D-aminoacyl-tRNAs. Also deacylates mischarged glycyl-tRNA(Ala), protecting cells against glycine mischarging by AlaRS. Acts via tRNA-based rather than protein-based catalysis; rejects L-amino acids rather than detecting D-amino acids in the active site. By recycling D-aminoacyl-tRNA to D-amino acids and free tRNA molecules, this enzyme counteracts the toxicity associated with the formation of D-aminoacyl-tRNA entities in vivo and helps enforce protein L-homochirality. This chain is D-aminoacyl-tRNA deacylase, found in Pseudomonas putida (strain GB-1).